We begin with the raw amino-acid sequence, 67 residues long: Large ribosomal subunit protein bL35 (67 aa).

The protein belongs to the bacterial ribosomal protein bL35 family.

The protein is Large ribosomal subunit protein bL35 of Rhizobium johnstonii (strain DSM 114642 / LMG 32736 / 3841) (Rhizobium leguminosarum bv. viciae).